A 353-amino-acid polypeptide reads, in one-letter code: UDP-N-acetylenolpyruvoylglucosamine reductase (353 aa).

Positions 31-201 (LASHAPAFVA…GSVRFALPRP (171 aa)) constitute an FAD-binding PCMH-type domain. The active site involves R177. S250 acts as the Proton donor in catalysis. Residue E346 is part of the active site.

This sequence belongs to the MurB family. Requires FAD as cofactor.

The protein localises to the cytoplasm. It catalyses the reaction UDP-N-acetyl-alpha-D-muramate + NADP(+) = UDP-N-acetyl-3-O-(1-carboxyvinyl)-alpha-D-glucosamine + NADPH + H(+). It functions in the pathway cell wall biogenesis; peptidoglycan biosynthesis. Cell wall formation. This chain is UDP-N-acetylenolpyruvoylglucosamine reductase, found in Bordetella parapertussis (strain 12822 / ATCC BAA-587 / NCTC 13253).